The sequence spans 1174 residues: Ribonucleoside-diphosphate reductase large subunit-like protein (1174 aa).

The short motif at 50 to 72 (PYVRIMNGVSGIQIGNHNAMSIA) is the RIP homotypic interaction motif (RHIM) element. Disordered stretches follow at residues 170–269 (ASNA…KLKP) and 291–325 (AAAAVAPESESSPAASAPPAAAAMATGGDDEDQSS). 3 stretches are compositionally biased toward low complexity: residues 182–202 (ATSGAGSAAATPAATTPAATA), 233–243 (HVSVGTQATPS), and 291–316 (AAAAVAPESESSPAASAPPAAAAMAT).

Belongs to the ribonucleoside diphosphate reductase large chain family. Self-assembles into homo-oligomeric amyloid fibrils. Interacts with host RIPK1 (via RIP homotypic interaction motif); this interaction inhibits RIPK1 ubiquitination thereby preventing effective activation of host NF-kappa-B. Interacts with host RIPK3 (via RIP homotypic interaction motif); this interaction disrupts RIPK3-RIPK1 interactions characteristic of TNF-alpha induced necroptosis, thereby suppressing this death pathway. Interacts (via RIP homotypic interaction motif) with host ZBP1 (via RIP homotypic interaction motif); this interaction inhibits recruitment of RIPK1 and RIPK3 to ZBP1 and prevents ZBP1-induced NF-kappa-B activation. Post-translationally, undergoes proteolytic cleavage, generating two peptides, a N-terminal and a 116 kDa. The N-terminal peptide retains RIPK1- and RIPK3-binding activity as well as cell death suppression activity.

The protein localises to the virion. It localises to the host cytoplasm. Provides optimal viral replication conditions by promoting host cell survival and avoiding the host inflammatory response linked to NF-kappa-B activation. Blocks RIPK1 ubiquitination, thereby preventing NF-kappa-B activation and virally induced inflammatory response. Prevents host necroptosis by targeting RIPK3 thereby preventing the formation of necroptotic RIPK1-RIPK3 complexes. Also inhibits ZBP1-induced necroptosis. Does not have ribonucleotide reductase activity. Betaherpesviruses probably use another strategy to expand the dNTP pool in a quiescent host cell. This chain is Ribonucleoside-diphosphate reductase large subunit-like protein, found in Murid herpesvirus 1 (strain Smith) (MuHV-1).